The chain runs to 202 residues: uncharacterized protein (202 aa).

This is an uncharacterized protein from Methanocaldococcus jannaschii (strain ATCC 43067 / DSM 2661 / JAL-1 / JCM 10045 / NBRC 100440) (Methanococcus jannaschii).